We begin with the raw amino-acid sequence, 114 residues long: SCP2 domain-containing protein YusD (114 aa).

Residues 21 to 101 (NASTLLITFQ…RALLKLEAIL (81 aa)) enclose the SCP2 domain.

The polypeptide is SCP2 domain-containing protein YusD (yusD) (Bacillus subtilis (strain 168)).